Consider the following 156-residue polypeptide: Cytochrome c-type biogenesis protein CcmE (156 aa).

Residues 1–16 (MNATKAPGGIKPKHQR) lie on the Cytoplasmic side of the membrane. Residues 17-37 (LVLLVIALVALIGAGLLAAYA) form a helical; Signal-anchor for type II membrane protein membrane-spanning segment. The Periplasmic portion of the chain corresponds to 38–156 (LSNQASYFYV…QAEAVVAETK (119 aa)). Positions 131 and 135 each coordinate heme.

Belongs to the CcmE/CycJ family.

The protein localises to the cell inner membrane. Heme chaperone required for the biogenesis of c-type cytochromes. Transiently binds heme delivered by CcmC and transfers the heme to apo-cytochromes in a process facilitated by CcmF and CcmH. The chain is Cytochrome c-type biogenesis protein CcmE from Novosphingobium aromaticivorans (strain ATCC 700278 / DSM 12444 / CCUG 56034 / CIP 105152 / NBRC 16084 / F199).